The sequence spans 134 residues: Ribonuclease VapC2 (134 aa).

The 122-residue stretch at 3 to 124 (YMLDTNICVY…TNNIKEFKRI (122 aa)) folds into the PINc domain. A Mg(2+)-binding site is contributed by Asp-6.

It belongs to the PINc/VapC protein family. In terms of assembly, forms complexes with VapB2; probably VapC2(4):VapB2(2) in the absence of DNA, and VapC2(4):VapB2(4) in the presence of DNA. Crystallizes as heterodimers with stoichiometry VapC2(4):VapB2(4) in the presence of its probable promoter DNA. The heterodimers are in contact via alternative VapC-VapC and VapB-VapB interactions. This subunit does not contact DNA. Requires Mg(2+) as cofactor.

Toxic component of a type II toxin-antitoxin (TA) system. Has ssRNase activity. Upon expression in E.coli or S.cerevisiae inhibits growth in liquid culture; in S.cerevisiae its expression leads to apoptosis-like characteristics. Rapidly induces apoptosis (within 2 hours) upon microinjection into mouse fibroblasts (L929 line); pretreatment of cells with dexamethasone protects them. Probably contributes to host cell death if bacterial cell lysis occurs during host infection. Its toxic effect is neutralized by coexpression with cognate antitoxin VapB2, its RNase activity is partially inhibited in vitro by VapB2. This is Ribonuclease VapC2 from Rickettsia felis (strain ATCC VR-1525 / URRWXCal2) (Rickettsia azadi).